We begin with the raw amino-acid sequence, 338 residues long: (-)-alpha-amorphene synthase ((2E,6E)-farnesyl diphosphate cyclizing) (338 aa).

2 residues coordinate Mg(2+): aspartate 105 and glutamate 109. The short motif at 105 to 109 is the DDXXE motif element; the sequence is DDRAE. Arginine 196 lines the substrate pocket. Residue serine 246 coordinates Mg(2+). Lysine 249 lines the substrate pocket. Glutamate 250 is a Mg(2+) binding site. Substrate is bound at residue 327–328; sequence RY.

It belongs to the terpene synthase family. Mg(2+) serves as cofactor.

The catalysed reaction is (2E,6E)-farnesyl diphosphate = (-)-alpha-amorphene + diphosphate. It participates in secondary metabolite biosynthesis; terpenoid biosynthesis. Functionally, catalyzes the conversion of (2E,6E)-farnesyl diphosphate (FPP) to yield the bicyclic sesquiterpene (1R,6S,7S)-(-)-alpha-amorphene via a probable 1,6-cyclization, which could involve the abstraction of the pyrophosphate from FPP to yield a (R)-bisabolyl cation. The only accepted substrate is (2E,6E)-farnesyl diphosphate (FPP). This is (-)-alpha-amorphene synthase ((2E,6E)-farnesyl diphosphate cyclizing) from Streptomyces viridochromogenes (strain DSM 40736 / JCM 4977 / BCRC 1201 / Tue 494).